Reading from the N-terminus, the 428-residue chain is MDSDGDDYVMSGSDQEYDDEEREILEDLRKQRKKPHDPVQEVLGFSDDDDDDDDDDEEEQQDVAELMRDSDIEGAEDDDRDLPNTMDWGSKRSTYYNTDFVDQDYSSYNAQEEEQARAEEEEAKKIQLRLAKRMSEADFQLDNVEAAPAGSSDDNELSHITKVTSDLAGLSERERRQLMHSESPEFIILTQDFQQHLDEVKNLLKPVLNYVRKHDVPMVPALQYAGLCHTVLTTYCSNVAFYLLLKARRIDVKAHPVIRRLVQLKDLIEELKPRYEEYIRPQLEALLERIEDGDAFTVLDVAQRKAKLQILNKYNDGQQASVSSDDDDNDDDDDAESKEKDLQEEAGEEEEEEDARRGITYQMAKNKGLTPHRKKELRNPRVKHRGKYRKALIRRKGAVRTVRKELQRYGGELSGIKAGVTKSVKFRT.

A disordered region spans residues M1 to S93. Acidic residues-rich tracts occupy residues Q15–I24 and S46–D62. Residues S152, S323, S324, and S337 each carry the phosphoserine modification. Positions G317–G386 are disordered. The segment covering S324–E336 has biased composition (acidic residues). Positions E344–E353 are enriched in acidic residues. Residues T370 to G386 show a composition bias toward basic residues.

Belongs to the SAS10 family.

The protein resides in the nucleus. Essential for gene silencing: has a role in the structure of silenced chromatin. May be involved in gene regulation during development. Binds RNA. This Drosophila melanogaster (Fruit fly) protein is Something about silencing protein 10.